The sequence spans 195 residues: Small ribosomal subunit protein uS5 (195 aa).

The S5 DRBM domain occupies 22–85; that stretch reads IVEKLVHINR…EEAKKSMIRV (64 aa). A disordered region spans residues 164–195; it reads QVAAKRGKKVSDVIGRRADGASAAQPAADAEG. Residues 172-182 show a composition bias toward basic and acidic residues; sequence KVSDVIGRRAD. Over residues 183–195 the composition is skewed to low complexity; the sequence is GASAAQPAADAEG.

This sequence belongs to the universal ribosomal protein uS5 family. Part of the 30S ribosomal subunit. Contacts proteins S4 and S8.

With S4 and S12 plays an important role in translational accuracy. Functionally, located at the back of the 30S subunit body where it stabilizes the conformation of the head with respect to the body. This Phenylobacterium zucineum (strain HLK1) protein is Small ribosomal subunit protein uS5.